We begin with the raw amino-acid sequence, 176 residues long: Dynein light chain Tctex-type 5-B (176 aa).

It belongs to the dynein light chain Tctex-type family.

This Xenopus laevis (African clawed frog) protein is Dynein light chain Tctex-type 5-B (Dynlt5-b).